We begin with the raw amino-acid sequence, 155 residues long: Small ribosomal subunit protein uS7c (155 aa).

The protein belongs to the universal ribosomal protein uS7 family. In terms of assembly, part of the 30S ribosomal subunit.

It is found in the plastid. Its subcellular location is the chloroplast. In terms of biological role, one of the primary rRNA binding proteins, it binds directly to 16S rRNA where it nucleates assembly of the head domain of the 30S subunit. The sequence is that of Small ribosomal subunit protein uS7c (rps7) from Cabomba caroliniana (Carolina fanwort).